A 274-amino-acid chain; its full sequence is 2-dehydro-3-deoxyphosphooctonate aldolase (274 aa).

The protein belongs to the KdsA family.

The protein resides in the cytoplasm. It carries out the reaction D-arabinose 5-phosphate + phosphoenolpyruvate + H2O = 3-deoxy-alpha-D-manno-2-octulosonate-8-phosphate + phosphate. It functions in the pathway carbohydrate biosynthesis; 3-deoxy-D-manno-octulosonate biosynthesis; 3-deoxy-D-manno-octulosonate from D-ribulose 5-phosphate: step 2/3. Its pathway is bacterial outer membrane biogenesis; lipopolysaccharide biosynthesis. The polypeptide is 2-dehydro-3-deoxyphosphooctonate aldolase (Rickettsia rickettsii (strain Iowa)).